We begin with the raw amino-acid sequence, 482 residues long: tRNA sulfurtransferase (482 aa).

The THUMP domain maps to 61-165 (PAIRDALTRI…NDRLLLVKGR (105 aa)). Residues 183-184 (LI), Lys-265, Gly-287, and Gln-296 each bind ATP. A disulfide bridge connects residues Cys-344 and Cys-456. The region spanning 404 to 482 (FGANDAILDI…GFSNVKVYRP (79 aa)) is the Rhodanese domain. The Cysteine persulfide intermediate role is filled by Cys-456.

Belongs to the ThiI family.

Its subcellular location is the cytoplasm. It carries out the reaction [ThiI sulfur-carrier protein]-S-sulfanyl-L-cysteine + a uridine in tRNA + 2 reduced [2Fe-2S]-[ferredoxin] + ATP + H(+) = [ThiI sulfur-carrier protein]-L-cysteine + a 4-thiouridine in tRNA + 2 oxidized [2Fe-2S]-[ferredoxin] + AMP + diphosphate. The catalysed reaction is [ThiS sulfur-carrier protein]-C-terminal Gly-Gly-AMP + S-sulfanyl-L-cysteinyl-[cysteine desulfurase] + AH2 = [ThiS sulfur-carrier protein]-C-terminal-Gly-aminoethanethioate + L-cysteinyl-[cysteine desulfurase] + A + AMP + 2 H(+). It functions in the pathway cofactor biosynthesis; thiamine diphosphate biosynthesis. In terms of biological role, catalyzes the ATP-dependent transfer of a sulfur to tRNA to produce 4-thiouridine in position 8 of tRNAs, which functions as a near-UV photosensor. Also catalyzes the transfer of sulfur to the sulfur carrier protein ThiS, forming ThiS-thiocarboxylate. This is a step in the synthesis of thiazole, in the thiamine biosynthesis pathway. The sulfur is donated as persulfide by IscS. This is tRNA sulfurtransferase from Klebsiella pneumoniae subsp. pneumoniae (strain ATCC 700721 / MGH 78578).